The following is a 289-amino-acid chain: Bifunctional protein FolD 2 (289 aa).

NADP(+) is bound by residues 162–164, Ser187, and Ile228; that span reads GRS.

It belongs to the tetrahydrofolate dehydrogenase/cyclohydrolase family. In terms of assembly, homodimer.

The enzyme catalyses (6R)-5,10-methylene-5,6,7,8-tetrahydrofolate + NADP(+) = (6R)-5,10-methenyltetrahydrofolate + NADPH. It carries out the reaction (6R)-5,10-methenyltetrahydrofolate + H2O = (6R)-10-formyltetrahydrofolate + H(+). Its pathway is one-carbon metabolism; tetrahydrofolate interconversion. Its function is as follows. Catalyzes the oxidation of 5,10-methylenetetrahydrofolate to 5,10-methenyltetrahydrofolate and then the hydrolysis of 5,10-methenyltetrahydrofolate to 10-formyltetrahydrofolate. The chain is Bifunctional protein FolD 2 from Deinococcus geothermalis (strain DSM 11300 / CIP 105573 / AG-3a).